Here is a 190-residue protein sequence, read N- to C-terminus: Probable nicotinate-nucleotide adenylyltransferase (190 aa).

It belongs to the NadD family.

The catalysed reaction is nicotinate beta-D-ribonucleotide + ATP + H(+) = deamido-NAD(+) + diphosphate. Its pathway is cofactor biosynthesis; NAD(+) biosynthesis; deamido-NAD(+) from nicotinate D-ribonucleotide: step 1/1. In terms of biological role, catalyzes the reversible adenylation of nicotinate mononucleotide (NaMN) to nicotinic acid adenine dinucleotide (NaAD). In Azobacteroides pseudotrichonymphae genomovar. CFP2, this protein is Probable nicotinate-nucleotide adenylyltransferase.